A 1155-amino-acid polypeptide reads, in one-letter code: DNA-directed RNA polymerase subunit beta (1155 aa).

It belongs to the RNA polymerase beta chain family. In terms of assembly, the RNAP catalytic core consists of 2 alpha, 1 beta, 1 beta' and 1 omega subunit. When a sigma factor is associated with the core the holoenzyme is formed, which can initiate transcription.

The enzyme catalyses RNA(n) + a ribonucleoside 5'-triphosphate = RNA(n+1) + diphosphate. DNA-dependent RNA polymerase catalyzes the transcription of DNA into RNA using the four ribonucleoside triphosphates as substrates. The chain is DNA-directed RNA polymerase subunit beta from Borreliella burgdorferi (strain ZS7) (Borrelia burgdorferi).